Here is a 583-residue protein sequence, read N- to C-terminus: Pentatricopeptide repeat-containing protein At2g33760 (583 aa).

9 PPR repeats span residues 71–105, 106–140, 141–171, 172–206, 207–241, 242–276, 277–303, 309–339, and 345–379; these read DDFL…NVSP, SNYT…GFGL, DTYV…MPEK, SIVA…GFEP, DSAT…GLDL, NVKL…NVAA, WTAM…MEDD, NNVT…MTKS, and GVEH…GKAT. A type E motif region spans residues 383–458; that stretch reads LWTAMLGACK…QVGYSVIEVE (76 aa). The segment at 459–489 is type E(+) motif; the sequence is NKTYMFSMGDESHQETGEIYRYLETLISRCK. The segment at 490–583 is type DYW motif; it reads EIGYAPVSEE…NGSCSCLDYW (94 aa).

This sequence belongs to the PPR family. PCMP-H subfamily.

The chain is Pentatricopeptide repeat-containing protein At2g33760 (PCMP-H6) from Arabidopsis thaliana (Mouse-ear cress).